Consider the following 549-residue polypeptide: Glucose-6-phosphate isomerase (549 aa).

The active-site Proton donor is E355. Residues H386 and K514 contribute to the active site.

Belongs to the GPI family.

It is found in the cytoplasm. It catalyses the reaction alpha-D-glucose 6-phosphate = beta-D-fructose 6-phosphate. It functions in the pathway carbohydrate biosynthesis; gluconeogenesis. Its pathway is carbohydrate degradation; glycolysis; D-glyceraldehyde 3-phosphate and glycerone phosphate from D-glucose: step 2/4. In terms of biological role, catalyzes the reversible isomerization of glucose-6-phosphate to fructose-6-phosphate. The polypeptide is Glucose-6-phosphate isomerase (Buchnera aphidicola subsp. Acyrthosiphon pisum (strain APS) (Acyrthosiphon pisum symbiotic bacterium)).